The sequence spans 255 residues: Phosphatidylglycerol--prolipoprotein diacylglyceryl transferase (255 aa).

Helical transmembrane passes span 15 to 35 (WYGIMIALGVLAALILANLNC), 46 to 66 (IDVFLISFPLAIIGARVYYVV), and 84 to 104 (LGGLAIHGGIIFGLGAAYIVS). R130 serves as a coordination point for a 1,2-diacyl-sn-glycero-3-phospho-(1'-sn-glycerol). Transmembrane regions (helical) follow at residues 169–189 (PTFLYESLWDLIVCIILVYIF), 196–216 (GTVICTYVGLYSLGRFFIEGL), and 228–248 (VAQLVSFIGIVLSISFFVYLK).

It belongs to the Lgt family.

It is found in the cell membrane. The enzyme catalyses L-cysteinyl-[prolipoprotein] + a 1,2-diacyl-sn-glycero-3-phospho-(1'-sn-glycerol) = an S-1,2-diacyl-sn-glyceryl-L-cysteinyl-[prolipoprotein] + sn-glycerol 1-phosphate + H(+). It functions in the pathway protein modification; lipoprotein biosynthesis (diacylglyceryl transfer). Its function is as follows. Catalyzes the transfer of the diacylglyceryl group from phosphatidylglycerol to the sulfhydryl group of the N-terminal cysteine of a prolipoprotein, the first step in the formation of mature lipoproteins. This Clostridium kluyveri (strain NBRC 12016) protein is Phosphatidylglycerol--prolipoprotein diacylglyceryl transferase.